The primary structure comprises 424 residues: Serine--tRNA ligase (424 aa).

229–231 (TAE) contributes to the L-serine binding site. Residues 260–262 (RKE) and V276 contribute to the ATP site. E283 lines the L-serine pocket. 347-350 (ELVS) contacts ATP. An L-serine-binding site is contributed by T383.

It belongs to the class-II aminoacyl-tRNA synthetase family. Type-1 seryl-tRNA synthetase subfamily. Homodimer. The tRNA molecule binds across the dimer.

The protein localises to the cytoplasm. It carries out the reaction tRNA(Ser) + L-serine + ATP = L-seryl-tRNA(Ser) + AMP + diphosphate + H(+). The enzyme catalyses tRNA(Sec) + L-serine + ATP = L-seryl-tRNA(Sec) + AMP + diphosphate + H(+). The protein operates within aminoacyl-tRNA biosynthesis; selenocysteinyl-tRNA(Sec) biosynthesis; L-seryl-tRNA(Sec) from L-serine and tRNA(Sec): step 1/1. Catalyzes the attachment of serine to tRNA(Ser). Is also able to aminoacylate tRNA(Sec) with serine, to form the misacylated tRNA L-seryl-tRNA(Sec), which will be further converted into selenocysteinyl-tRNA(Sec). This chain is Serine--tRNA ligase, found in Methanosphaera stadtmanae (strain ATCC 43021 / DSM 3091 / JCM 11832 / MCB-3).